Consider the following 160-residue polypeptide: Small ribosomal subunit protein uS7 (160 aa).

It belongs to the universal ribosomal protein uS7 family. In terms of assembly, part of the 30S ribosomal subunit. Contacts proteins S9 and S11.

In terms of biological role, one of the primary rRNA binding proteins, it binds directly to 16S rRNA where it nucleates assembly of the head domain of the 30S subunit. Is located at the subunit interface close to the decoding center, probably blocks exit of the E-site tRNA. In Rickettsia conorii (strain ATCC VR-613 / Malish 7), this protein is Small ribosomal subunit protein uS7.